Consider the following 102-residue polypeptide: ATP-dependent Clp protease adapter protein ClpS (102 aa).

This sequence belongs to the ClpS family. In terms of assembly, binds to the N-terminal domain of the chaperone ClpA.

In terms of biological role, involved in the modulation of the specificity of the ClpAP-mediated ATP-dependent protein degradation. The polypeptide is ATP-dependent Clp protease adapter protein ClpS (Shewanella frigidimarina (strain NCIMB 400)).